The sequence spans 399 residues: MLRWLTAGESHGPALVGIIEGVPAGVELTSSQIADALARRRLGYGRGARMKFEQDVVTVLGGVRHGITQGGPVAIQVGNTEWPKWEQIMAADPVAPEILADQARNAPLTRPRPGHADFTGMQKYGFDEARPVLERASARETATRVALGTVASQFLKQLGIELVSHTVSIASVSVPEGRPLPVPANVIALDADPLRCFDRETSDAMVAEVDAAHKEGETLGGVVEVLAYGLPPGLGSYVHWDRRLDSRLAAALMGIQAIKGVEVGDGFLTASRRGSAAHDEIVKDSDGRIIRTSNRAGGIEGGMSIGDVLRVRAAMKPIATVPRALKTIDVSTGEAAKAHHQRSDVCAVPAAGVVAEAMVALVLAEAVAEKFGGDSVAETARNIKGYLDNIPASLDSIGQ.

The NADP(+) site is built by arginine 40 and arginine 46. FMN is bound by residues 135-137, 256-257, glycine 301, 316-320, and arginine 342; these read RAS, QA, and KPIAT.

This sequence belongs to the chorismate synthase family. Homotetramer. FMNH2 is required as a cofactor.

It carries out the reaction 5-O-(1-carboxyvinyl)-3-phosphoshikimate = chorismate + phosphate. It functions in the pathway metabolic intermediate biosynthesis; chorismate biosynthesis; chorismate from D-erythrose 4-phosphate and phosphoenolpyruvate: step 7/7. In terms of biological role, catalyzes the anti-1,4-elimination of the C-3 phosphate and the C-6 proR hydrogen from 5-enolpyruvylshikimate-3-phosphate (EPSP) to yield chorismate, which is the branch point compound that serves as the starting substrate for the three terminal pathways of aromatic amino acid biosynthesis. This reaction introduces a second double bond into the aromatic ring system. The protein is Chorismate synthase of Arthrobacter sp. (strain FB24).